Reading from the N-terminus, the 507-residue chain is MVTLRVDEISNIIRERIEQYNREVTIVNTGTVLQVGDGIARIHGLDQVMAGELVEFEEGTVGIALNLESNNVGVVLMGDGLMIQEGSSVKATGRIAQIPVSEAYLGRVINALAKPIDGRGEISASESRLIESPAPGIISRRSVYEPLQTGLIAIDSMIPIGRGQRELIIGDRQTGKTAVATDTILNQKGQNVICLYVAIGQKASSVAQVVTTFQERGAMEYTIVVAETADSPATLQYLAPYTGAALAEYFMYRERHTSIIYDDLSKQAQAYRQMSLLLRRPPGREAYPGDVFYLHSRLLERAAKSSSHLGEGSMTALPIVETQSGDVSAYIPTNVISITDGQIFLSSDLFNAGIRPAINVGISVSRVGSAAQIKAMKQVAGKSKLELAQFAELEAFAQFASDLDKATQNQLARGQRLRELLKQSQSAPLTVEEQILTIYTGANGYLDPLDIGQVKKFLVQLRTHLKTNKPQFQEIISSTKTFTEQAEALLKEAIPEQMELFILQEQT.

170–177 (GDRQTGKT) contributes to the ATP binding site.

This sequence belongs to the ATPase alpha/beta chains family. In terms of assembly, F-type ATPases have 2 components, CF(1) - the catalytic core - and CF(0) - the membrane proton channel. CF(1) has five subunits: alpha(3), beta(3), gamma(1), delta(1), epsilon(1). CF(0) has four main subunits: a, b, b' and c.

It localises to the plastid. Its subcellular location is the chloroplast thylakoid membrane. The catalysed reaction is ATP + H2O + 4 H(+)(in) = ADP + phosphate + 5 H(+)(out). Its function is as follows. Produces ATP from ADP in the presence of a proton gradient across the membrane. The alpha chain is a regulatory subunit. The polypeptide is ATP synthase subunit alpha, chloroplastic (Drimys granadensis).